Consider the following 62-residue polypeptide: Large ribosomal subunit protein uL30 (62 aa).

This sequence belongs to the universal ribosomal protein uL30 family. In terms of assembly, part of the 50S ribosomal subunit.

The protein is Large ribosomal subunit protein uL30 of Prosthecochloris aestuarii (strain DSM 271 / SK 413).